The sequence spans 92 residues: uncharacterized protein (92 aa).

This is an uncharacterized protein from Bacillus subtilis (strain 168).